The sequence spans 137 residues: Large ribosomal subunit protein uL16c (137 aa).

Belongs to the universal ribosomal protein uL16 family. As to quaternary structure, part of the 50S ribosomal subunit.

Its subcellular location is the plastid. The protein resides in the chloroplast. In Thalassiosira pseudonana (Marine diatom), this protein is Large ribosomal subunit protein uL16c.